Reading from the N-terminus, the 316-residue chain is Olfactory receptor 10A7 (316 aa).

Topologically, residues 1–25 are extracellular; it reads MICENHTRVTEFILLGFTNNPEMQV. N-linked (GlcNAc...) asparagine glycosylation is present at Asn-5. A helical membrane pass occupies residues 26 to 46; sequence SLFIFFLAIYTVTLLGNFLIV. Topologically, residues 47–54 are cytoplasmic; it reads TVTSVDLA. The chain crosses the membrane as a helical span at residues 55–75; sequence LQTPMYFFLQNLSLLEVCFTL. Over 76-99 the chain is Extracellular; it reads VMVPKMLVDLVSPRKIISFVGCGT. The helical transmembrane segment at 100–120 threads the bilayer; the sequence is QMYFFFFFGSSECFLLSMMAY. Residues 121–139 are Cytoplasmic-facing; that stretch reads DRFVAICNPLHYSVIMNRS. A helical membrane pass occupies residues 140-160; the sequence is LCLWMAIGSWMSGVPVSMLQT. Residues 161–197 lie on the Extracellular side of the membrane; that stretch reads AWMMALPFCGPNAVDHFFCDGPPVLKLVTVDTTMYEM. Residues 198–217 form a helical membrane-spanning segment; sequence QALASTLLFIMFPFCLILVS. At 218 to 237 the chain is on the cytoplasmic side; sequence YTRIIITILRMSSATGRQKA. Residues 238–258 form a helical membrane-spanning segment; that stretch reads FSTCSSHLIVVSLFYGTASLT. The Extracellular portion of the chain corresponds to 259-271; sequence YLRPKSNQSPESK. Residues 272–292 traverse the membrane as a helical segment; that stretch reads KLVSLSYTVITPMLNPIIYGL. Residues 293–316 lie on the Cytoplasmic side of the membrane; the sequence is RNNEVKGAVKRTITQKVLQKLDVF.

It belongs to the G-protein coupled receptor 1 family.

The protein resides in the cell membrane. In terms of biological role, odorant receptor. In Homo sapiens (Human), this protein is Olfactory receptor 10A7 (OR10A7).